The primary structure comprises 320 residues: Acetyl-coenzyme A carboxylase carboxyl transferase subunit alpha (320 aa).

One can recognise a CoA carboxyltransferase C-terminal domain in the interval 39 to 293; the sequence is ALDAKAAKLL…RGAIAAMLKE (255 aa).

This sequence belongs to the AccA family. In terms of assembly, acetyl-CoA carboxylase is a heterohexamer composed of biotin carboxyl carrier protein (AccB), biotin carboxylase (AccC) and two subunits each of ACCase subunit alpha (AccA) and ACCase subunit beta (AccD).

The protein resides in the cytoplasm. It catalyses the reaction N(6)-carboxybiotinyl-L-lysyl-[protein] + acetyl-CoA = N(6)-biotinyl-L-lysyl-[protein] + malonyl-CoA. It functions in the pathway lipid metabolism; malonyl-CoA biosynthesis; malonyl-CoA from acetyl-CoA: step 1/1. Component of the acetyl coenzyme A carboxylase (ACC) complex. First, biotin carboxylase catalyzes the carboxylation of biotin on its carrier protein (BCCP) and then the CO(2) group is transferred by the carboxyltransferase to acetyl-CoA to form malonyl-CoA. This Ruegeria pomeroyi (strain ATCC 700808 / DSM 15171 / DSS-3) (Silicibacter pomeroyi) protein is Acetyl-coenzyme A carboxylase carboxyl transferase subunit alpha.